We begin with the raw amino-acid sequence, 372 residues long: Aryl-hydrocarbon-interacting protein-like 1 (372 aa).

Positions 53 to 145 (REVGQPMHII…DLDELQKEPQ (93 aa)) constitute a PPIase FKBP-type domain. TPR repeat units lie at residues 178-211 (VPVL…LRNL), 230-263 (NTLI…HPGI), and 264-297 (VKAY…EPSM). Residues 325 to 372 (NMLSQGATWSPAEPPAEPPAESSTEPPAEPPAEPPAELTLTPGHPLQH) are disordered.

Interacts with NUB1.

The protein localises to the cytoplasm. Its subcellular location is the nucleus. May be important in protein trafficking and/or protein folding and stabilization. This is Aryl-hydrocarbon-interacting protein-like 1 (AIPL1) from Saimiri boliviensis boliviensis (Bolivian squirrel monkey).